The chain runs to 418 residues: AP-3 complex subunit mu-2 (418 aa).

The 242-residue stretch at 176–417 folds into the MHD domain; sequence NNEAYFDVVE…MTKAGKFQVR (242 aa).

Belongs to the adaptor complexes medium subunit family. In terms of assembly, adaptor protein complex 3 (AP-3) is a heterotetramer composed of two large adaptins (delta-type subunit AP3D1 and beta-type subunit AP3B1 or AP3B2), a medium adaptin (mu-type subunit AP3M1 or AP3M2) and a small adaptin (sigma-type subunit APS1 or AP3S2). AP-3 associates with the BLOC-1 complex.

The protein resides in the golgi apparatus. The protein localises to the cytoplasmic vesicle membrane. Component of the adaptor complexes which link clathrin to receptors in coated vesicles. Clathrin-associated protein complexes are believed to interact with the cytoplasmic tails of membrane proteins, leading to their selection and concentration. Ap47 is a subunit of the plasma membrane adaptor. In concert with the BLOC-1 complex, AP-3 is required to target cargos into vesicles assembled at cell bodies for delivery into neurites and nerve terminals. In Rattus norvegicus (Rat), this protein is AP-3 complex subunit mu-2 (Ap3m2).